A 332-amino-acid polypeptide reads, in one-letter code: uncharacterized protein (332 aa).

It belongs to the herpesviridae BBRF2 family.

This is an uncharacterized protein from Bos taurus (Bovine).